A 477-amino-acid chain; its full sequence is Stromelysin-3 (477 aa).

The first 17 residues, 1-17 (MHLLILLPALCVLGAHS), serve as a signal peptide directing secretion. The propeptide at 18 to 85 (APLSYTYLQH…SSSGRNRQKR (68 aa)) is activation peptide. The tract at residues 64-83 (RCGVPDIPAPPDSSSGRNRQ) is disordered. Residues Cys65, His152, and Asp154 each contribute to the Zn(2+) site. The Ca(2+) site is built by Asp159, Gly160, Gly162, and Ile164. Zn(2+) is bound by residues His167, His180, and His203. Glu204 is an active-site residue. Zn(2+)-binding residues include His207 and His213. The cysteines at positions 279 and 466 are disulfide-linked. 4 Hemopexin repeats span residues 280 to 324 (KTNF…WRGI), 325 to 369 (PDTV…GISV), 370 to 418 (TQIQ…WRGV), and 419 to 466 (PKGI…FFNC).

Belongs to the peptidase M10A family. Ca(2+) is required as a cofactor. It depends on Zn(2+) as a cofactor. Expressed in fibroblast cells that are activated by thyroid hormone. High levels in resorbing tail.

The protein localises to the secreted. It localises to the extracellular space. The protein resides in the extracellular matrix. May be involved in the modification of the extracellular matrix during metamorphic apoptosis. The protein is Stromelysin-3 (mmp11) of Xenopus laevis (African clawed frog).